The primary structure comprises 257 residues: Acetylglutamate kinase (257 aa).

Residues 43–44, Arg65, and Asn157 contribute to the substrate site; that span reads GG. ATP contacts are provided by residues 180–185 and 208–210; these read DVSGIL and IIT.

Belongs to the acetylglutamate kinase family. ArgB subfamily. In terms of assembly, homodimer.

The protein resides in the cytoplasm. The enzyme catalyses N-acetyl-L-glutamate + ATP = N-acetyl-L-glutamyl 5-phosphate + ADP. It functions in the pathway amino-acid biosynthesis; L-arginine biosynthesis; N(2)-acetyl-L-ornithine from L-glutamate: step 2/4. Its function is as follows. Catalyzes the ATP-dependent phosphorylation of N-acetyl-L-glutamate. This chain is Acetylglutamate kinase, found in Pectobacterium atrosepticum (strain SCRI 1043 / ATCC BAA-672) (Erwinia carotovora subsp. atroseptica).